The chain runs to 421 residues: Na(+)/H(+) antiporter NhaA 1 (421 aa).

The next 11 membrane-spanning stretches (helical) occupy residues 48 to 68 (SSGL…NSPW), 93 to 113 (LYWW…GLEI), 129 to 149 (SLAL…YTLV), 157 to 177 (AGWG…LALL), 187 to 207 (VLLA…IALF), 215 to 235 (LALG…AAGV), 253 to 273 (LASG…IPLG), 299 to 319 (FLIL…GGSL), 326 to 346 (VVLG…WLAV), 364 to 384 (GLGL…GLAF), and 392 to 412 (AAKL…ITVL).

The protein belongs to the NhaA Na(+)/H(+) (TC 2.A.33) antiporter family.

It is found in the cell membrane. It carries out the reaction Na(+)(in) + 2 H(+)(out) = Na(+)(out) + 2 H(+)(in). Functionally, na(+)/H(+) antiporter that extrudes sodium in exchange for external protons. The chain is Na(+)/H(+) antiporter NhaA 1 from Deinococcus geothermalis (strain DSM 11300 / CIP 105573 / AG-3a).